A 475-amino-acid chain; its full sequence is Chromosomal replication initiator protein DnaA (475 aa).

A domain I, interacts with DnaA modulators region spans residues 1–73 (MSDIEQERWS…LACWQAELPD (73 aa)). The interval 73-131 (DVHRIDLMVRSAMRCAAPAKEAPAADPRRPEHGDGRASTELKMVATAPASANHDALGGS) is domain II. Residues 132–354 (PLDPRLTFAS…GAINRLLAHS (223 aa)) are domain III, AAA+ region. ATP-binding residues include Gly179, Gly181, Lys182, and Thr183. Residues 355–475 (KLNAQPVTLE…VELLKRQLQE (121 aa)) form a domain IV, binds dsDNA region.

Belongs to the DnaA family. In terms of assembly, oligomerizes as a right-handed, spiral filament on DNA at oriC.

It is found in the cytoplasm. Its function is as follows. Plays an essential role in the initiation and regulation of chromosomal replication. ATP-DnaA binds to the origin of replication (oriC) to initiate formation of the DNA replication initiation complex once per cell cycle. Binds the DnaA box (a 9 base pair repeat at the origin) and separates the double-stranded (ds)DNA. Forms a right-handed helical filament on oriC DNA; dsDNA binds to the exterior of the filament while single-stranded (ss)DNA is stabiized in the filament's interior. The ATP-DnaA-oriC complex binds and stabilizes one strand of the AT-rich DNA unwinding element (DUE), permitting loading of DNA polymerase. After initiation quickly degrades to an ADP-DnaA complex that is not apt for DNA replication. Binds acidic phospholipids. This Nitrobacter hamburgensis (strain DSM 10229 / NCIMB 13809 / X14) protein is Chromosomal replication initiator protein DnaA.